A 253-amino-acid polypeptide reads, in one-letter code: Proproteinase E (253 aa).

Residues 1 to 11 constitute a propeptide, activation peptide; it reads FSQPFSRPSSR. Positions 12-251 constitute a Peptidase S1 domain; the sequence is VVNGEDAVPY…FIDWIDETIA (240 aa). 5 disulfide bridges follow: C41–C57, C100–C103, C140–C206, C171–C187, and C196–C227.

The protein belongs to the peptidase S1 family. In terms of assembly, monomer. The zymogen is secreted as a ternary complex composed of procarboxypeptidase A, chymotrypsinogen C and proproteinase E. Pancreas.

The protein localises to the secreted. It localises to the extracellular space. In terms of biological role, may protect procarboxypeptidase A against denaturation in the acidic environment of the ruminant duodenum. The polypeptide is Proproteinase E (Bos taurus (Bovine)).